Consider the following 364-residue polypeptide: N-acetyl-gamma-glutamyl-phosphate reductase (364 aa).

Residue C157 is part of the active site.

It belongs to the NAGSA dehydrogenase family. Type 1 subfamily.

Its subcellular location is the cytoplasm. The enzyme catalyses N-acetyl-L-glutamate 5-semialdehyde + phosphate + NADP(+) = N-acetyl-L-glutamyl 5-phosphate + NADPH + H(+). Its pathway is amino-acid biosynthesis; L-arginine biosynthesis; N(2)-acetyl-L-ornithine from L-glutamate: step 3/4. Its function is as follows. Catalyzes the NADPH-dependent reduction of N-acetyl-5-glutamyl phosphate to yield N-acetyl-L-glutamate 5-semialdehyde. The chain is N-acetyl-gamma-glutamyl-phosphate reductase from Bifidobacterium longum (strain NCC 2705).